The sequence spans 43 residues: Protein PsbN (43 aa).

The chain crosses the membrane as a helical span at residues 5–27 (TLVXISISGSLVSFTGYALYTAF).

The protein belongs to the PsbN family.

It is found in the plastid. The protein resides in the chloroplast thylakoid membrane. May play a role in photosystem I and II biogenesis. This Calycanthus floridus (Eastern sweetshrub) protein is Protein PsbN.